The chain runs to 126 residues: C-type natriuretic peptide (126 aa).

The signal sequence occupies residues 1–23 (MHLSQLLACALLLSLLSLRPSEA). Residues 20–71 (PSEAKPGAPPKVPRTPPGEEVAEPQAAGGGQKKGDKTPGGGGANLKDDRSRL) are disordered. A propeptide spanning residues 24–73 (KPGAPPKVPRTPPGEEVAEPQAAGGGQKKGDKTPGGGGANLKDDRSRLLR) is cleaved from the precursor. Pro residues predominate over residues 26-35 (GAPPKVPRTP). Over residues 46–62 (AGGGQKKGDKTPGGGGA) the composition is skewed to gly residues. Residues cysteine 110 and cysteine 126 are joined by a disulfide bond.

Belongs to the natriuretic peptide family. Degraded by IDE (in vitro).

It is found in the secreted. Its function is as follows. Hormone which plays a role in endochondral ossification through regulation of cartilaginous growth plate chondrocytes proliferation and differentiation. May also be vasoactive and natriuretic. Acts by specifically binding and stimulating NPR2 to produce cGMP. Binds the clearance receptor NPR3. The protein is C-type natriuretic peptide (NPPC) of Ovis aries (Sheep).